Here is an 883-residue protein sequence, read N- to C-terminus: Phosphoenolpyruvate carboxylase (883 aa).

Residues His-138 and Lys-546 contribute to the active site.

It belongs to the PEPCase type 1 family. The cofactor is Mg(2+).

It catalyses the reaction oxaloacetate + phosphate = phosphoenolpyruvate + hydrogencarbonate. Functionally, forms oxaloacetate, a four-carbon dicarboxylic acid source for the tricarboxylic acid cycle. The polypeptide is Phosphoenolpyruvate carboxylase (Enterobacter sp. (strain 638)).